A 547-amino-acid polypeptide reads, in one-letter code: Type I inositol polyphosphate 5-phosphatase 4 (547 aa).

The segment covering 56-67 (CSVRKSKTETRS) has biased composition (basic and acidic residues). The interval 56–80 (CSVRKSKTETRSKRNSGRARRNKLD) is disordered. Catalytic regions lie at residues 387–402 (DRVIWLGDLNYRIALS) and 467–482 (KRRTPAWCDRILWHGS).

This sequence belongs to the inositol polyphosphate 5-phosphatase family.

This Arabidopsis thaliana (Mouse-ear cress) protein is Type I inositol polyphosphate 5-phosphatase 4.